We begin with the raw amino-acid sequence, 1023 residues long: 2-oxoglutarate dehydrogenase complex component E1 (1023 aa).

The transit peptide at 1-40 (MFHLRTCAAKLRPLTASQTVKTFSQNRPAAARTFGQIRCY) directs the protein to the mitochondrion. K74 carries the post-translational modification N6-succinyllysine. Phosphoserine is present on S100. The Ca(2+) site is built by H143, D156, and D158. A thiamine diphosphate-binding site is contributed by R312. Position 401 is an N6-acetyllysine (K401). Thiamine diphosphate contacts are provided by D411, N444, and I446. Residues D411, N444, and I446 each coordinate Mg(2+). A Glycyl lysine isopeptide (Lys-Gly) (interchain with G-Cter in ubiquitin) cross-link involves residue K534. K564 carries the N6-succinyllysine modification. Q676 lines the thiamine diphosphate pocket. K970 bears the N6-acetyllysine mark.

It belongs to the alpha-ketoglutarate dehydrogenase family. As to quaternary structure, homodimer. The 2-oxoglutarate dehydrogenase complex is composed of OGDH (2-oxoglutarate dehydrogenase; E1), DLST (dihydrolipoamide succinyltransferase; E2), DLD (dihydrolipoamide dehydrogenase; E3) and the assembly factor KGD4. It contains multiple copies of the three enzymatic components (E1, E2 and E3). In the nucleus, the 2-oxoglutarate dehydrogenase complex associates with KAT2A. Interacts with ABHD11; this interaction maintains the functional lipoylation of the 2-oxoglutarate dehydrogenase complex. It depends on thiamine diphosphate as a cofactor. The cofactor is Mg(2+).

Its subcellular location is the mitochondrion. It is found in the nucleus. It carries out the reaction N(6)-[(R)-lipoyl]-L-lysyl-[protein] + 2-oxoglutarate + H(+) = N(6)-[(R)-S(8)-succinyldihydrolipoyl]-L-lysyl-[protein] + CO2. Calcium ions and ADP stimulate, whereas ATP and NADH reduce catalytic activity. Functionally, 2-oxoglutarate dehydrogenase (E1o) component of the 2-oxoglutarate dehydrogenase complex (OGDHC). Participates in the first step, rate limiting for the overall conversion of 2-oxoglutarate to succinyl-CoA and CO(2) catalyzed by the whole OGDHC. Catalyzes the irreversible decarboxylation of 2-oxoglutarate (alpha-ketoglutarate) via the thiamine diphosphate (ThDP) cofactor and subsequent transfer of the decarboxylated acyl intermediate on an oxidized dihydrolipoyl group that is covalently amidated to the E2 enzyme (dihydrolipoyllysine-residue succinyltransferase or DLST). Plays a key role in the Krebs (citric acid) cycle, which is a common pathway for oxidation of fuel molecules, including carbohydrates, fatty acids, and amino acids. Can catalyze the decarboxylation of 2-oxoadipate in vitro, but at a much lower rate than 2-oxoglutarate. Mainly active in the mitochondrion. A fraction of the 2-oxoglutarate dehydrogenase complex also localizes in the nucleus and is required for lysine succinylation of histones: associates with KAT2A on chromatin and provides succinyl-CoA to histone succinyltransferase KAT2A. The sequence is that of 2-oxoglutarate dehydrogenase complex component E1 from Bos taurus (Bovine).